A 101-amino-acid polypeptide reads, in one-letter code: NAD(P)H-quinone oxidoreductase subunit 4L, chloroplastic (101 aa).

3 consecutive transmembrane segments (helical) span residues 2-22, 32-52, and 61-81; these read MLEHVLVLSAYLFSFVLYGLI, MCLELILNAVNLNFVTFSDFF, and IFSIFVIAIAAAEAAIGLAIV.

The protein belongs to the complex I subunit 4L family. As to quaternary structure, NDH is composed of at least 16 different subunits, 5 of which are encoded in the nucleus.

Its subcellular location is the plastid. It is found in the chloroplast thylakoid membrane. It carries out the reaction a plastoquinone + NADH + (n+1) H(+)(in) = a plastoquinol + NAD(+) + n H(+)(out). The catalysed reaction is a plastoquinone + NADPH + (n+1) H(+)(in) = a plastoquinol + NADP(+) + n H(+)(out). NDH shuttles electrons from NAD(P)H:plastoquinone, via FMN and iron-sulfur (Fe-S) centers, to quinones in the photosynthetic chain and possibly in a chloroplast respiratory chain. The immediate electron acceptor for the enzyme in this species is believed to be plastoquinone. Couples the redox reaction to proton translocation, and thus conserves the redox energy in a proton gradient. In Guizotia abyssinica (Niger), this protein is NAD(P)H-quinone oxidoreductase subunit 4L, chloroplastic.